Here is a 551-residue protein sequence, read N- to C-terminus: CTP synthase (551 aa).

Residues 1–267 (MSGTKYIFVT…DALVLEKLGL (267 aa)) are amidoligase domain. Ser15 is a CTP binding site. A UTP-binding site is contributed by Ser15. Residue 16–21 (SIGKGT) coordinates ATP. Tyr56 lines the L-glutamine pocket. Asp73 provides a ligand contact to ATP. Mg(2+)-binding residues include Asp73 and Glu141. CTP is bound by residues 148-150 (DIE), 188-193 (KTKPTQ), and Lys224. Residues 188–193 (KTKPTQ) and Lys224 contribute to the UTP site. The Glutamine amidotransferase type-1 domain occupies 292 to 534 (RVAVIGKYIR…VGACLGAAEE (243 aa)). Residue Gly355 participates in L-glutamine binding. The active-site Nucleophile; for glutamine hydrolysis is Cys382. Residues 383 to 386 (LGMQ), Glu406, and Arg462 contribute to the L-glutamine site. Catalysis depends on residues His507 and Glu509.

It belongs to the CTP synthase family. As to quaternary structure, homotetramer.

The enzyme catalyses UTP + L-glutamine + ATP + H2O = CTP + L-glutamate + ADP + phosphate + 2 H(+). It catalyses the reaction L-glutamine + H2O = L-glutamate + NH4(+). The catalysed reaction is UTP + NH4(+) + ATP = CTP + ADP + phosphate + 2 H(+). The protein operates within pyrimidine metabolism; CTP biosynthesis via de novo pathway; CTP from UDP: step 2/2. Allosterically activated by GTP, when glutamine is the substrate; GTP has no effect on the reaction when ammonia is the substrate. The allosteric effector GTP functions by stabilizing the protein conformation that binds the tetrahedral intermediate(s) formed during glutamine hydrolysis. Inhibited by the product CTP, via allosteric rather than competitive inhibition. In terms of biological role, catalyzes the ATP-dependent amination of UTP to CTP with either L-glutamine or ammonia as the source of nitrogen. Regulates intracellular CTP levels through interactions with the four ribonucleotide triphosphates. This is CTP synthase from Rubrobacter xylanophilus (strain DSM 9941 / JCM 11954 / NBRC 16129 / PRD-1).